Consider the following 116-residue polypeptide: NADH-ubiquinone oxidoreductase chain 3 (116 aa).

Transmembrane regions (helical) follow at residues 3–23 (LFAT…LVSF), 56–76 (FFLV…LLPL), and 88–108 (TLFW…YEWA).

This sequence belongs to the complex I subunit 3 family. Core subunit of respiratory chain NADH dehydrogenase (Complex I) which is composed of 45 different subunits.

It localises to the mitochondrion inner membrane. It catalyses the reaction a ubiquinone + NADH + 5 H(+)(in) = a ubiquinol + NAD(+) + 4 H(+)(out). Functionally, core subunit of the mitochondrial membrane respiratory chain NADH dehydrogenase (Complex I) which catalyzes electron transfer from NADH through the respiratory chain, using ubiquinone as an electron acceptor. Essential for the catalytic activity of complex I. In Danio rerio (Zebrafish), this protein is NADH-ubiquinone oxidoreductase chain 3 (mt-nd3).